A 400-amino-acid chain; its full sequence is MAKEKFVRSKPHLNVGTIGHIDHGKTTLTAAITKYLSFFGRADYTPYEQIDKAPEEKERGITINISHIEYETETRHYAHIDCPGHADYIKNMITGAAQMDGAILVVAATDGPMPQTREHVLLARQVNVPAMIVFINKTDMVDDEELIDLVEMEVRELLNKYEFPGDDLPVVRGSALKAVEGPDDPNDPVYAPIKELLDTMDSYFPEPQRETDKPFLMPVEDVFSITGRGTVVTGRIERGVIRPGDEVEIIGMSYDIKKTVVTSVEMFRKILDEGLAGDNVGCLLRGIDKDEVERGQVLAKPGSITPHTTFKAQVYVLKKEEGGRHTPFQKGYKPQFFIRTADVTGELIDFPAGVEMVMPGDNVEMTIKLIYPVAIEEGMRFAIREGGRTVGAGVVTAIVE.

A tr-type G domain is found at 10–208; the sequence is KPHLNVGTIG…TMDSYFPEPQ (199 aa). Residues 19 to 26 are G1; the sequence is GHIDHGKT. Residue 19 to 26 participates in GTP binding; sequence GHIDHGKT. Residue T26 coordinates Mg(2+). The G2 stretch occupies residues 60-64; sequence GITIN. Residues 81 to 84 are G3; the sequence is DCPG. GTP is bound by residues 81-85 and 136-139; these read DCPGH and NKTD. The interval 136 to 139 is G4; it reads NKTD. Positions 174-176 are G5; it reads SAL.

This sequence belongs to the TRAFAC class translation factor GTPase superfamily. Classic translation factor GTPase family. EF-Tu/EF-1A subfamily. In terms of assembly, monomer.

The protein localises to the cytoplasm. It catalyses the reaction GTP + H2O = GDP + phosphate + H(+). Functionally, GTP hydrolase that promotes the GTP-dependent binding of aminoacyl-tRNA to the A-site of ribosomes during protein biosynthesis. The polypeptide is Elongation factor Tu (Thermosipho africanus (strain TCF52B)).